A 64-amino-acid polypeptide reads, in one-letter code: Leader peptide SpeFL (64 aa).

Positions 32-38 match the Ornithine recognition loop motif; sequence HIRRTRH. L-ornithine is bound at residue R35.

This sequence belongs to the speF operon leader peptide family. As to quaternary structure, binds ornithine in stalled 70S ribosomes, blocking the upper two-thirds of the exit tunnel. Contacts 23S rRNA and ribosomal proteins L4 and L22.

A small protein (arrest peptide) encoded upstream of inducible ornithine carboxylase gene (speF) that controls expression of downstream genes (usually speF and potE) by transcriptional and translational attenuation. The polypeptide is Leader peptide SpeFL (Haemophilus influenzae (strain ATCC 51907 / DSM 11121 / KW20 / Rd)).